The chain runs to 598 residues: UvrABC system protein C (598 aa).

In terms of domain architecture, GIY-YIG spans 14-91; it reads DSPGCYLHKD…IQKNMPKYNI (78 aa). The UVR domain maps to 196 to 231; it reads DKIIEDLRSKMLAASEEMAFERAAEYRDLISGIATM.

This sequence belongs to the UvrC family. In terms of assembly, interacts with UvrB in an incision complex.

Its subcellular location is the cytoplasm. Its function is as follows. The UvrABC repair system catalyzes the recognition and processing of DNA lesions. UvrC both incises the 5' and 3' sides of the lesion. The N-terminal half is responsible for the 3' incision and the C-terminal half is responsible for the 5' incision. This Streptococcus pyogenes serotype M5 (strain Manfredo) protein is UvrABC system protein C.